Here is a 71-residue protein sequence, read N- to C-terminus: Translation initiation factor IF-1 (71 aa).

Residues 1–71 enclose the S1-like domain; that stretch reads MSKDDLIQFT…LTKGRVIHRH (71 aa).

It belongs to the IF-1 family. As to quaternary structure, component of the 30S ribosomal translation pre-initiation complex which assembles on the 30S ribosome in the order IF-2 and IF-3, IF-1 and N-formylmethionyl-tRNA(fMet); mRNA recruitment can occur at any time during PIC assembly.

The protein localises to the cytoplasm. Functionally, one of the essential components for the initiation of protein synthesis. Stabilizes the binding of IF-2 and IF-3 on the 30S subunit to which N-formylmethionyl-tRNA(fMet) subsequently binds. Helps modulate mRNA selection, yielding the 30S pre-initiation complex (PIC). Upon addition of the 50S ribosomal subunit IF-1, IF-2 and IF-3 are released leaving the mature 70S translation initiation complex. In Rickettsia conorii (strain ATCC VR-613 / Malish 7), this protein is Translation initiation factor IF-1.